The primary structure comprises 299 residues: Non-structural protein V (299 aa).

Residues 137-160 (DGVEVWGGDEESENSDVDSGEPDP) are compositionally biased toward acidic residues. Disordered stretches follow at residues 137 to 186 (DGVE…ETVE) and 205 to 229 (KAGK…KPIK). 8 residues coordinate Zn(2+): H232, C251, C255, C267, C269, C272, C276, and C279.

It belongs to the paramyxoviruses V protein family. Interacts with host IFIH1/MDA5 and DHX58/LGP2. Interacts with host TYK2; this interaction inhibits the type I interferon signaling pathway.

The protein resides in the host cytoplasm. Plays an essential role in the inhibition of host immune response. Prevents the establishment of cellular antiviral state by blocking interferon-alpha/beta (IFN-alpha/beta) production and signaling pathway. Interacts with host IFIH1/MDA5 and DHX58/LGP2 to inhibit the transduction pathway involved in the activation of IFN-beta promoter, thus protecting the virus against cell antiviral state. Blocks the type I interferon signaling pathway by interacting with host TYK2 and thereby inhibiting downstream STAT1 and STAT2 phosphorylation. The protein is Non-structural protein V (P/V) of Rinderpest virus (strain Kabete O) (RDV).